Reading from the N-terminus, the 1084-residue chain is AP-3 complex subunit beta-1 (1084 aa).

Polar residues predominate over residues Met1–Gln11. Residues Met1–Ser26 are disordered. Ser276 and Ser609 each carry phosphoserine. A disordered region spans residues Ala663–Asn800. The span at Ala666–Ser677 shows a compositional bias: basic and acidic residues. Positions Glu678–Gly717 are enriched in acidic residues. Over residues Glu718–Arg729 the composition is skewed to low complexity. Basic and acidic residues predominate over residues Gly738–Lys753. Ser742 bears the Phosphoserine mark. Residues Thr754–Glu767 are compositionally biased toward low complexity. Positions Ser768–Glu781 are enriched in acidic residues. The segment covering Ser782–Asn800 has biased composition (basic and acidic residues).

This sequence belongs to the adaptor complexes large subunit family. In terms of assembly, adaptor protein complex 3 (AP-3) is a heterotetramer composed of two large adaptins (delta-type subunit AP3D1 and beta-type subunit AP3B1 or AP3B2), a medium adaptin (mu-type subunit AP3M1 or AP3M2) and a small adaptin (sigma-type subunit APS1 or AP3S2). AP-3 associates with the BLOC-1 complex. Interacts with KIF3A; interaction is direct; interaction is impaired by pyrophosphorylation of AP3B1. In terms of processing, phosphorylated on serine residues. Pyrophosphorylation by 5-diphosphoinositol pentakisphosphate (5-IP7) impairs interaction with KIF3A. Serine pyrophosphorylation is achieved by Mg(2+)-dependent, but enzyme independent transfer of a beta-phosphate from a inositol pyrophosphate to a pre-phosphorylated serine residue.

It localises to the cytoplasmic vesicle. Its subcellular location is the clathrin-coated vesicle membrane. It is found in the golgi apparatus. Its function is as follows. Subunit of non-clathrin- and clathrin-associated adaptor protein complex 3 (AP-3) that plays a role in protein sorting in the late-Golgi/trans-Golgi network (TGN) and/or endosomes. The AP complexes mediate both the recruitment of clathrin to membranes and the recognition of sorting signals within the cytosolic tails of transmembrane cargo molecules. AP-3 appears to be involved in the sorting of a subset of transmembrane proteins targeted to lysosomes and lysosome-related organelles. In concert with the BLOC-1 complex, AP-3 is required to target cargos into vesicles assembled at cell bodies for delivery into neurites and nerve terminals. This Bos taurus (Bovine) protein is AP-3 complex subunit beta-1 (AP3B1).